The sequence spans 138 residues: Transposon Tn10 TetD protein (138 aa).

The 99-residue stretch at 31–129 (KDVLLWIEHN…KVTPSYYRRN (99 aa)) folds into the HTH araC/xylS-type domain. 2 consecutive DNA-binding regions (H-T-H motif) follow at residues 48-69 (DDVA…KKVT) and 96-119 (ILEI…KYIF).

This Escherichia coli protein is Transposon Tn10 TetD protein (tetD).